The sequence spans 61 residues: Small ribosomal subunit protein uS14 (61 aa).

Zn(2+)-binding residues include C24, C27, C40, and C43.

Belongs to the universal ribosomal protein uS14 family. Zinc-binding uS14 subfamily. In terms of assembly, part of the 30S ribosomal subunit. Contacts proteins S3 and S10. The cofactor is Zn(2+).

Binds 16S rRNA, required for the assembly of 30S particles and may also be responsible for determining the conformation of the 16S rRNA at the A site. The polypeptide is Small ribosomal subunit protein uS14 (Thermobifida fusca (strain YX)).